Here is a 404-residue protein sequence, read N- to C-terminus: uncharacterized protein (404 aa).

An N-terminal signal peptide occupies residues 1-21; it reads MRKLGLALSIMGLLLVSIVAG. Cys22 carries the N-acetylcysteine modification. Cys22 carries S-archaeol cysteine lipidation.

The protein belongs to the BMP lipoprotein family.

It is found in the cell membrane. This is an uncharacterized protein from Pyrococcus abyssi (strain GE5 / Orsay).